Here is a 1206-residue protein sequence, read N- to C-terminus: Translocase of chloroplast 132, chloroplastic (1206 aa).

Residue Gly2 is modified to N-acetylglycine. The stretch at 13–33 forms a coiled coil; that stretch reads REDKKLAEDRISDEQVVKNEL. 2 disordered regions span residues 33–75 and 97–119; these read LVRS…SDDL and VGDLDETSSNEGGVKDFTAVGES. Acidic residues predominate over residues 39-49; the sequence is VRDDNEDEVFE. Ser195 carries the post-translational modification Phosphoserine. A disordered region spans residues 233 to 499; that stretch reads QTEQEVEEGE…TTTEADEHDE (267 aa). The segment covering 309–324 has biased composition (polar residues); sequence AYTSNIVTNASGDNEV. A compositionally biased stretch (low complexity) spans 325-336; sequence SSAVTSSPLEES. Ser337, Ser363, and Ser398 each carry phosphoserine. The segment covering 357–379 has biased composition (polar residues); sequence LASSPHSYPESTEVHSNSGSPGV. Over residues 403–427 the composition is skewed to basic and acidic residues; it reads KELEKQQSSRVHVDPEITENSHVET. Over residues 430–440 the composition is skewed to low complexity; sequence EVVSSVSPTES. The span at 468 to 492 shows a compositional bias: polar residues; sequence APQQSRVNGNGSHNQFQQAEDSTTT. In terms of domain architecture, AIG1-type G spans 572 to 801; it reads DFSCTIMVLG…KLQDNIPGRP (230 aa). The tract at residues 581–588 is G1; the sequence is GKSGVGKS. GTP contacts are provided by residues 584 to 589 and 603 to 608; these read GVGKSA and DAFQMG. Ser588 is a binding site for Mg(2+). Positions 603–606 are homodimerization; it reads DAFQ. Residues 607–611 form a G2 region; it reads MGTKR. Residues 628-631 are G3; that stretch reads DTPG. Positions 666–671 are homodimerization; the sequence is RLDMQS. The tract at residues 700–703 is G4; sequence THAA. GTP contacts are provided by residues His701 and 749–750; that span reads EN. Residues 749–751 are G5; sequence ENH. The tract at residues 824-862 is disordered; that stretch reads QPKLPEQQYGDEEDEDDLEESSDSDEESEYDQLPPFKSL. A compositionally biased stretch (acidic residues) spans 832-853; that stretch reads YGDEEDEDDLEESSDSDEESEY. Residues 1182–1199 traverse the membrane as a helical segment; the sequence is LAMVAIVPLFKKLLSYYY.

It belongs to the TRAFAC class TrmE-Era-EngA-EngB-Septin-like GTPase superfamily. AIG1/Toc34/Toc159-like paraseptin GTPase family. TOC159 subfamily. In terms of assembly, homodimer. Part of the TOC core complex that includes 1 protein for the specific recognition of transit peptides surrounded by a ring composed of four proteins forming translocation channels, and four to five GTP-binding proteins providing energy. This core complex can interact with components of the TIC complex to form a larger import complex. Chloroplastic protein precursor such as prSS (precursor of the RuBisCO small subunit) interacts with these complexes. The TOC complex contains a specific subset of polar lipids such as digalactosyldiacylglyceride (DGDG), phosphatidylcholine (PC) and phosphatidylglycerol (PG). Mg(2+) serves as cofactor. In terms of processing, phosphorylated by KOC1. In terms of tissue distribution, expressed in seedlings, leaves, flowers, and roots.

The protein resides in the plastid. It localises to the chloroplast outer membrane. Its subcellular location is the cytoplasm. GTPase involved in protein precursor import into chloroplasts. Seems to recognize chloroplast-destined precursor proteins and regulate their presentation to the translocation channel through GTP hydrolysis. Probably specialized in the import of nuclear encoded non-photosynthetic preproteins from the cytoplasm to the chloroplast. The polypeptide is Translocase of chloroplast 132, chloroplastic (Arabidopsis thaliana (Mouse-ear cress)).